A 232-amino-acid chain; its full sequence is MEHAILVIATRNKGKSREIGKYLEHFPVEVRDLNDFGPIPEVVEDGATFEENAYKKALLTARVLGLPALADDSGLEVAALGGAPGIHSARYAGPDASDAANNEKLLAALSGVEDRAARFCCVLSLAVPSGPALTYEAFCEGTILTAPRGDNGFGYDPLFHYAPAGKTFAEMSLDEKAKVSHRGRALLELQREFDQVLKWLHARTADENLRRGVGHDMCVTGEDPRGTEPKME.

Threonine 10–lysine 15 is a substrate binding site. Catalysis depends on aspartate 72, which acts as the Proton acceptor. Residue aspartate 72 participates in Mg(2+) binding. Substrate is bound by residues serine 73, phenylalanine 153 to aspartate 156, lysine 176, and histidine 181 to arginine 182.

The protein belongs to the HAM1 NTPase family. Homodimer. It depends on Mg(2+) as a cofactor.

The catalysed reaction is XTP + H2O = XMP + diphosphate + H(+). It catalyses the reaction dITP + H2O = dIMP + diphosphate + H(+). It carries out the reaction ITP + H2O = IMP + diphosphate + H(+). In terms of biological role, pyrophosphatase that catalyzes the hydrolysis of nucleoside triphosphates to their monophosphate derivatives, with a high preference for the non-canonical purine nucleotides XTP (xanthosine triphosphate), dITP (deoxyinosine triphosphate) and ITP. Seems to function as a house-cleaning enzyme that removes non-canonical purine nucleotides from the nucleotide pool, thus preventing their incorporation into DNA/RNA and avoiding chromosomal lesions. The sequence is that of dITP/XTP pyrophosphatase from Syntrophobacter fumaroxidans (strain DSM 10017 / MPOB).